The primary structure comprises 330 residues: Ubiquinone biosynthesis protein COQ4, mitochondrial (330 aa).

The N-terminal 31 residues, 1 to 31, are a transit peptide targeting the mitochondrion; sequence MLQSTKVTKSVLTNVLRVEQRRGFLLSGAAV. Positions 212, 213, 216, and 228 each coordinate Zn(2+).

It belongs to the COQ4 family. In terms of assembly, component of a multi-subunit COQ enzyme complex, composed of at least COQ3, COQ4, COQ5, COQ6, COQ7 and COQ9. It depends on Zn(2+) as a cofactor.

Its subcellular location is the mitochondrion inner membrane. The catalysed reaction is a 4-hydroxy-3-methoxy-5-(all-trans-polyprenyl)benzoate + H(+) = a 2-methoxy-6-(all-trans-polyprenyl)phenol + CO2. It functions in the pathway cofactor biosynthesis; ubiquinone biosynthesis. Lyase that catalyzes the C1-decarboxylation of 4-hydroxy-3-methoxy-5-(all-trans-polyprenyl)benzoic acid into 2-methoxy-6-(all-trans-polyprenyl)phenol during ubiquinone biosynthesis. The polypeptide is Ubiquinone biosynthesis protein COQ4, mitochondrial (Candida glabrata (strain ATCC 2001 / BCRC 20586 / JCM 3761 / NBRC 0622 / NRRL Y-65 / CBS 138) (Yeast)).